Here is a 467-residue protein sequence, read N- to C-terminus: MFYDEAKIFVKAGNGGNGAVSFHREKYIPRGGPDGGDGGRGGNVYLRVDPSLNTLLPFSYQRQFRAEDGQPGQGNNKNGRDGADLYIDVPPGTVVYDEATGAVLGDLLEPGEVLLVARGGFGGRGNQHFATPSRQAPRFAEKGEPGEERWLRLELKLLADVGLVGLPNAGKSTLLAAVSAARPKIADYPFTTLEPMLGVVSVPGREGGTFVLADLPGLIAGASRGAGLGHEFLRHVERTRLLIHVLDGSGGLEGRDPLEDFHTINAELAAYSASLAGKPQIVAVNKMDLPEAQANWPRIARALDELGYTAYPISAATGQGVGELIRATWERLQQLPRPERVAPPLRSHRVYTLDRSQERWEAIRLSPHHFALRGPKIERLTLMTDFSNPEAAERYQRLLARWGISRRLLALGIQPGDIVHVAGRELVWEPELAEAEQTRPRRRLTKRERLLKRAGLLEEPEEEIGEQ.

Residues 1 to 158 (MFYDEAKIFV…RWLRLELKLL (158 aa)) form the Obg domain. Residues 159–333 (ADVGLVGLPN…LIRATWERLQ (175 aa)) enclose the OBG-type G domain. GTP contacts are provided by residues 165–172 (GLPNAGKS), 190–194 (FTTLE), 214–217 (DLPG), 285–288 (NKMD), and 314–316 (SAA). Mg(2+) is bound by residues serine 172 and threonine 192. One can recognise an OCT domain in the interval 352 to 430 (TLDRSQERWE…VAGRELVWEP (79 aa)).

This sequence belongs to the TRAFAC class OBG-HflX-like GTPase superfamily. OBG GTPase family. Monomer. Mg(2+) is required as a cofactor.

It is found in the cytoplasm. Functionally, an essential GTPase which binds GTP, GDP and possibly (p)ppGpp with moderate affinity, with high nucleotide exchange rates and a fairly low GTP hydrolysis rate. Plays a role in control of the cell cycle, stress response, ribosome biogenesis and in those bacteria that undergo differentiation, in morphogenesis control. The sequence is that of GTPase Obg from Thermomicrobium roseum (strain ATCC 27502 / DSM 5159 / P-2).